The sequence spans 379 residues: Retinoic acid receptor RXR-alpha-B (379 aa).

A compositionally biased stretch (polar residues) spans methionine 1 to serine 22. A disordered region spans residues methionine 1 to aspartate 24. The modulating stretch occupies residues methionine 1 to isoleucine 53. Residues lysine 51 to glutamate 126 constitute a DNA-binding region (nuclear receptor). Cysteine 54, cysteine 57, cysteine 71, and cysteine 74 together coordinate Zn(2+). An NR C4-type zinc finger spans residues cysteine 54–cysteine 74. The nuclear localization signal stretch occupies residues lysine 79–lysine 84. Positions 90, 96, 106, and 109 each coordinate Zn(2+). An NR C4-type zinc finger spans residues cysteine 90–cysteine 109. A hinge region spans residues lysine 120–glycine 141. The region spanning asparagine 144 to proline 375 is the NR LBD domain. 9-cis-retinoate-binding residues include arginine 233 and alanine 244. Residues arginine 233 and alanine 244 each coordinate all-trans-retinoate. The required for nuclear export stretch occupies residues arginine 265–glycine 285. The interval isoleucine 364–proline 375 is AF-2.

It belongs to the nuclear hormone receptor family. NR2 subfamily. In terms of assembly, homodimer. Heterodimer; with a rar molecule. Binds DNA preferentially as a rar/rxr heterodimer. As to expression, uniform expression from the blastula to mid-gastrula stages. At 12 hours post-fertilization (hpf), expressed strongly in the tail and weakly elsewhere. At 24 hpf, weak expression in the forebrain, eyes and pharyngeal endoderm and continued expression in the tail mesoderm. At 48 hpf, anterior expression limited to ventral cells underlying the head, medial expression in the pectoral fin bud mesoderm and continued tail expression.

It is found in the nucleus. Its function is as follows. Receptor for retinoic acid that acts as a transcription factor. Forms homo- or heterodimers with retinoic acid receptors (rars) and binds to target response elements in response to their ligands, all-trans or 9-cis retinoic acid, to regulate gene expression in various biological processes. The rar/rxr heterodimers bind to the retinoic acid response elements (RARE) composed of tandem 5'-AGGTCA-3' sites known as DR1-DR5 to regulate transcription. The high affinity ligand for rxrs is 9-cis retinoic acid. In the absence of ligand, the rar/rxr heterodimers associate with a multiprotein complex containing transcription corepressors that induce histone deacetylation, chromatin condensation and transcriptional suppression. On ligand binding, the corepressors dissociate from the receptors and coactivators are recruited leading to transcriptional activation. This chain is Retinoic acid receptor RXR-alpha-B (rxrab), found in Danio rerio (Zebrafish).